The chain runs to 23 residues: MITVPHVVNLNLTGQWRENGGQI.

In Naegleria fowleri (Brain eating amoeba), this protein is Unknown protein NF016 from 2D-PAGE.